A 523-amino-acid polypeptide reads, in one-letter code: Solute carrier family 2, facilitated glucose transporter member 2 (523 aa).

Topologically, residues methionine 1 to leucine 10 are cytoplasmic. A helical membrane pass occupies residues alanine 11 to isoleucine 31. Topologically, residues asparagine 32–serine 97 are extracellular. Asparagine 62 carries N-linked (GlcNAc...) asparagine glycosylation. Residues leucine 98–glycine 118 traverse the membrane as a helical segment. Residues aspartate 119–alanine 126 are Cytoplasmic-facing. A helical membrane pass occupies residues methionine 127–glycine 147. The Extracellular portion of the chain corresponds to proline 148–arginine 157. Residues serine 158–isoleucine 178 form a helical membrane-spanning segment. Residues alanine 179–alanine 186 are Cytoplasmic-facing. The helical transmembrane segment at leucine 187 to leucine 207 threads the bilayer. Glutamine 192 contacts D-glucose. The Extracellular portion of the chain corresponds to serine 208–histidine 216. Residues tryptophan 217 to phenylalanine 237 traverse the membrane as a helical segment. The Cytoplasmic segment spans residues cysteine 238–proline 302. Residues isoleucine 303 to tyrosine 323 traverse the membrane as a helical segment. Residues glutamine 313–glutamine 314 and asparagine 319 each bind D-glucose. The Extracellular portion of the chain corresponds to tyrosine 324–proline 337. Residues valine 338 to leucine 358 traverse the membrane as a helical segment. Asparagine 348 contributes to the D-glucose binding site. Over valine 359–leucine 367 the chain is Cytoplasmic. The chain crosses the membrane as a helical span at residues phenylalanine 368 to leucine 388. Over leucine 389–threonine 401 the chain is Extracellular. Residues alanine 402–valine 422 traverse the membrane as a helical segment. D-glucose contacts are provided by glutamate 411 and tryptophan 419. Over alanine 423–proline 432 the chain is Cytoplasmic. The chain crosses the membrane as a helical span at residues threonine 433–phenylalanine 453. At glutamine 454–leucine 460 the chain is on the extracellular side. Residues glycine 461–phenylalanine 481 traverse the membrane as a helical segment. At lysine 482 to valine 523 the chain is on the cytoplasmic side. At serine 522 the chain carries Phosphoserine.

Belongs to the major facilitator superfamily. Sugar transporter (TC 2.A.1.1) family. Glucose transporter subfamily. In terms of processing, N-glycosylated; required for stability and retention at the cell surface of pancreatic beta cells. In embryo, expressed in endoderm layer of yolk sac and liver primordium.

It is found in the cell membrane. It catalyses the reaction D-glucose(out) = D-glucose(in). The enzyme catalyses D-fructose(out) = D-fructose(in). The catalysed reaction is L-dehydroascorbate(out) = L-dehydroascorbate(in). It carries out the reaction D-galactose(in) = D-galactose(out). With respect to regulation, D-glucose and maltose competitively inhibit fructose transport. D-glucose, D-fructose and maltose inhibit deoxyglucose transport. Facilitative hexose transporter that mediates the transport of glucose, fructose and galactose. Likely mediates the bidirectional transfer of glucose across the plasma membrane of hepatocytes and is responsible for uptake of glucose by the beta cells; may comprise part of the glucose-sensing mechanism of the beta cell. May also participate with the Na(+)/glucose cotransporter in the transcellular transport of glucose in the small intestine and kidney. Also able to mediate the transport of dehydroascorbate. This chain is Solute carrier family 2, facilitated glucose transporter member 2, found in Mus musculus (Mouse).